The sequence spans 212 residues: Glycerol-3-phosphate acyltransferase (212 aa).

A run of 4 helical transmembrane segments spans residues 3–23 (ILLAALVAYLIGSVSFAVVVS), 78–98 (DVAVACVAIAVFLGHLYPVFF), 115–135 (AVHPVLGLATALTWLIVAFFF), and 155–177 (FLFGTSHNPVAWAVLAMSVLLVW).

It belongs to the PlsY family. In terms of assembly, probably interacts with PlsX.

The protein resides in the cell inner membrane. The catalysed reaction is an acyl phosphate + sn-glycerol 3-phosphate = a 1-acyl-sn-glycero-3-phosphate + phosphate. Its pathway is lipid metabolism; phospholipid metabolism. Functionally, catalyzes the transfer of an acyl group from acyl-phosphate (acyl-PO(4)) to glycerol-3-phosphate (G3P) to form lysophosphatidic acid (LPA). This enzyme utilizes acyl-phosphate as fatty acyl donor, but not acyl-CoA or acyl-ACP. The sequence is that of Glycerol-3-phosphate acyltransferase from Burkholderia ambifaria (strain ATCC BAA-244 / DSM 16087 / CCUG 44356 / LMG 19182 / AMMD) (Burkholderia cepacia (strain AMMD)).